We begin with the raw amino-acid sequence, 515 residues long: Endoglucanase 2 (515 aa).

The first 31 residues, 1 to 31 (MVAKPRSRCCCCSVFIGVIILIAIIIAVIFT), serve as a signal peptide directing secretion. A glycan (N-linked (GlcNAc...) asparagine) is linked at Asn-37. Asp-100 serves as the catalytic Nucleophile. The N-linked (GlcNAc...) asparagine glycan is linked to Asn-250. Residue His-433 is part of the active site. Asn-475 carries N-linked (GlcNAc...) asparagine glycosylation. Residue Asp-480 is part of the active site. Residue Asn-483 is glycosylated (N-linked (GlcNAc...) asparagine). Residue Glu-489 is part of the active site.

It belongs to the glycosyl hydrolase 9 (cellulase E) family.

The protein resides in the secreted. It catalyses the reaction Endohydrolysis of (1-&gt;4)-beta-D-glucosidic linkages in cellulose, lichenin and cereal beta-D-glucans.. In Arabidopsis thaliana (Mouse-ear cress), this protein is Endoglucanase 2.